We begin with the raw amino-acid sequence, 86 residues long: ATP synthase epsilon chain (86 aa).

It belongs to the ATPase epsilon chain family. F-type ATPases have 2 components, CF(1) - the catalytic core - and CF(0) - the membrane proton channel. CF(1) has five subunits: alpha(3), beta(3), gamma(1), delta(1), epsilon(1). CF(0) has three main subunits: a, b and c.

It localises to the cell inner membrane. Its function is as follows. Produces ATP from ADP in the presence of a proton gradient across the membrane. This is ATP synthase epsilon chain (atpC) from Caulobacter vibrioides (strain ATCC 19089 / CIP 103742 / CB 15) (Caulobacter crescentus).